Reading from the N-terminus, the 111-residue chain is Cytochrome c (111 aa).

Serine 1 is modified (N-acetylserine). Heme c is bound by residues cysteine 22, cysteine 25, and histidine 26. Lysine 80 is subject to N6,N6,N6-trimethyllysine. Methionine 88 is a heme c binding site.

The protein belongs to the cytochrome c family. Binds 1 heme c group covalently per subunit.

The protein resides in the mitochondrion intermembrane space. Electron carrier protein. The oxidized form of the cytochrome c heme group can accept an electron from the heme group of the cytochrome c1 subunit of cytochrome reductase. Cytochrome c then transfers this electron to the cytochrome oxidase complex, the final protein carrier in the mitochondrial electron-transport chain. This chain is Cytochrome c, found in Ulva intestinalis (Hollow green nori).